Consider the following 1025-residue polypeptide: Multidrug resistance protein MdtC (1025 aa).

The next 12 membrane-spanning stretches (helical) occupy residues 3-23 (FFAL…AITL), 333-353 (EVEQ…FLFL), 360-380 (IIPA…MYLC), 387-407 (LSLM…IVVL), 431-451 (VGFT…PLLL), 463-483 (FAVT…TLTP), 528-548 (LVGV…ISIP), 853-873 (VILI…LYES), 875-895 (VHPL…LLAL), 897-917 (LFNA…IGIV), 953-973 (PIMM…LSGG), and 984-1004 (ITIV…TPVV).

This sequence belongs to the resistance-nodulation-cell division (RND) (TC 2.A.6) family. MdtC subfamily. In terms of assembly, part of a tripartite efflux system composed of MdtA, MdtB and MdtC. MdtC forms a heteromultimer with MdtB.

The protein resides in the cell inner membrane. Functionally, the MdtABC tripartite complex confers resistance against novobiocin and deoxycholate. This is Multidrug resistance protein MdtC from Escherichia coli O7:K1 (strain IAI39 / ExPEC).